Reading from the N-terminus, the 118-residue chain is DNA-binding protein inhibitor ID-3-A (118 aa).

The bHLH domain occupies 32–84; it reads SHKGPGMDEPMGLLYDMNGCYSKLKELVPGIPQGSKLSQVEILQHVIDYIFDL.

As to quaternary structure, homodimer. Heterodimer with other HLH proteins. Interacts (via HLH domain) with the bHLH protein hes4/hairy2 (via Orange domain). Interacts with stat3. At gastrula stage, expressed in all three germ layers, but becomes localized to discrete domains of the developing nervous system during neurulation, including the anterior neural plate, cement gland, eye anlagen, otic placode and both cranial and trunk premigratory and early migratory neural crest cells. Also expressed in the most dorsal and ventral portions of the myotome, the developing heart and anterior blood islets, and in the tail fin mesenchyme. Expressed at a low level in limbs, with expression decreasing as limbs develop, but expressed at a high level in blastemas (regenerated limbs), where expression is localized to both the blastermal epidermis and mesenchyme. Widely expressed in adults including the liver and heart.

The protein localises to the nucleus. Functionally, transcriptional regulator (lacking a basic DNA binding domain) which negatively regulates the basic helix-loop-helix (bHLH) transcription factors by forming heterodimers and inhibiting their DNA binding and transcriptional activity. Influences cell fate decisions in the embryo by sequestering and blocking the activity of the bHLH transcription factors that control these decisions. Inhibits the binding of myogenic bHLH-containing complexes to E-box DNA, thereby preventing activation of muscle-specific target genes. Also inhibits the activity of neurogenic factor neurod1/neuroD. Plays a role in cell cycle progression and survival of neural crest progenitors; binding to either hes4-B/hairy2b or stat3 blocks the formation of transcription factor complexes and the repressor function of hes4-B/hairy2B, to allow neural crest progenitors to differentiate. May play a role in the regulation of the circadian rhythm. The sequence is that of DNA-binding protein inhibitor ID-3-A (id3-a) from Xenopus laevis (African clawed frog).